A 301-amino-acid chain; its full sequence is MQKPQYIDRITKKKVIEPIFYEKTMLFLYNSKLGKKLSVFLSTHPIFSRIYGWLQRCSWTRRQIRPFMNRYKISEKELTKPVADFTSFNDFFTRKLKPEARPIVGGKEVFITPVDGRYLVYPNVSEFDKFIVKSKAFSLPKLLGDHELTKLYAHGSIVFARLAPFDYHRFHFPCDCLPQKTRCVNGALFSVHPLAVKDNFILFCENKRTVTVLETEQFGNVLYLEVGAMNVGSIVQTFSPNQTYAKGDEKGFFAFGGSTVILLFLPNAIRFDNDLLKNSRMGFETRCLMGQSLGRSQREEI.

Active-site charge relay system; for autoendoproteolytic cleavage activity residues include D115, H171, and S258. The active-site Schiff-base intermediate with substrate; via pyruvic acid; for decarboxylase activity is S258. Position 258 is a pyruvic acid (Ser); by autocatalysis (S258).

This sequence belongs to the phosphatidylserine decarboxylase family. PSD-B subfamily. Prokaryotic type II sub-subfamily. In terms of assembly, heterodimer of a large membrane-associated beta subunit and a small pyruvoyl-containing alpha subunit. The cofactor is pyruvate. Is synthesized initially as an inactive proenzyme. Formation of the active enzyme involves a self-maturation process in which the active site pyruvoyl group is generated from an internal serine residue via an autocatalytic post-translational modification. Two non-identical subunits are generated from the proenzyme in this reaction, and the pyruvate is formed at the N-terminus of the alpha chain, which is derived from the carboxyl end of the proenzyme. The autoendoproteolytic cleavage occurs by a canonical serine protease mechanism, in which the side chain hydroxyl group of the serine supplies its oxygen atom to form the C-terminus of the beta chain, while the remainder of the serine residue undergoes an oxidative deamination to produce ammonia and the pyruvoyl prosthetic group on the alpha chain. During this reaction, the Ser that is part of the protease active site of the proenzyme becomes the pyruvoyl prosthetic group, which constitutes an essential element of the active site of the mature decarboxylase.

The protein localises to the cell membrane. The catalysed reaction is a 1,2-diacyl-sn-glycero-3-phospho-L-serine + H(+) = a 1,2-diacyl-sn-glycero-3-phosphoethanolamine + CO2. It participates in phospholipid metabolism; phosphatidylethanolamine biosynthesis; phosphatidylethanolamine from CDP-diacylglycerol: step 2/2. In terms of biological role, catalyzes the formation of phosphatidylethanolamine (PtdEtn) from phosphatidylserine (PtdSer). The polypeptide is Phosphatidylserine decarboxylase proenzyme (Chlamydia pneumoniae (Chlamydophila pneumoniae)).